A 361-amino-acid chain; its full sequence is UDP-N-acetylglucosamine--N-acetylmuramyl-(pentapeptide) pyrophosphoryl-undecaprenol N-acetylglucosamine transferase (361 aa).

UDP-N-acetyl-alpha-D-glucosamine-binding positions include 11-13, Asn-120, Arg-161, Ser-188, and Gln-282; that span reads TGG.

It belongs to the glycosyltransferase 28 family. MurG subfamily.

The protein resides in the cell inner membrane. The enzyme catalyses di-trans,octa-cis-undecaprenyl diphospho-N-acetyl-alpha-D-muramoyl-L-alanyl-D-glutamyl-meso-2,6-diaminopimeloyl-D-alanyl-D-alanine + UDP-N-acetyl-alpha-D-glucosamine = di-trans,octa-cis-undecaprenyl diphospho-[N-acetyl-alpha-D-glucosaminyl-(1-&gt;4)]-N-acetyl-alpha-D-muramoyl-L-alanyl-D-glutamyl-meso-2,6-diaminopimeloyl-D-alanyl-D-alanine + UDP + H(+). The protein operates within cell wall biogenesis; peptidoglycan biosynthesis. Cell wall formation. Catalyzes the transfer of a GlcNAc subunit on undecaprenyl-pyrophosphoryl-MurNAc-pentapeptide (lipid intermediate I) to form undecaprenyl-pyrophosphoryl-MurNAc-(pentapeptide)GlcNAc (lipid intermediate II). The polypeptide is UDP-N-acetylglucosamine--N-acetylmuramyl-(pentapeptide) pyrophosphoryl-undecaprenol N-acetylglucosamine transferase (Prochlorococcus marinus (strain MIT 9303)).